A 443-amino-acid chain; its full sequence is Amino-acid acetyltransferase (443 aa).

The N-acetyltransferase domain occupies 296-436 (EQIRRATIND…KMYNYQRRSK (141 aa)).

Belongs to the acetyltransferase family. ArgA subfamily. Homohexamer.

The protein localises to the cytoplasm. It carries out the reaction L-glutamate + acetyl-CoA = N-acetyl-L-glutamate + CoA + H(+). It participates in amino-acid biosynthesis; L-arginine biosynthesis; N(2)-acetyl-L-ornithine from L-glutamate: step 1/4. The polypeptide is Amino-acid acetyltransferase (Salmonella arizonae (strain ATCC BAA-731 / CDC346-86 / RSK2980)).